The following is a 238-amino-acid chain: MAGHSKWANTKHRKERADHKKGKIFSRIIKELISAVKLGGADPKSNARLRMVIQKAKENNIPNENIERNLKKATSAEQKNFEEVTYELYGHGGVGIIVEAMTDNKNRTASDMRIAINKRGGSLVEPGSVLYNFARKGACTVAKSSIDEEVIFSYAIEAGAEDLDTEDEENFLVICAPSELASVKEKLISQGATCSEDRLIYLPLRLVDCDEKDGEANLALIDWLEQIEDVDDVYHNMS.

The segment at 1–20 (MAGHSKWANTKHRKERADHK) is disordered. Over residues 9–20 (NTKHRKERADHK) the composition is skewed to basic residues.

Belongs to the TACO1 family.

Its subcellular location is the cytoplasm. This Chlamydia pneumoniae (Chlamydophila pneumoniae) protein is Probable transcriptional regulatory protein CPn_0573/CP_0176/CPj0573/CpB0595.